Reading from the N-terminus, the 143-residue chain is 3-hydroxyacyl-[acyl-carrier-protein] dehydratase FabZ (143 aa).

Histidine 49 is an active-site residue.

This sequence belongs to the thioester dehydratase family. FabZ subfamily.

It is found in the cytoplasm. It catalyses the reaction a (3R)-hydroxyacyl-[ACP] = a (2E)-enoyl-[ACP] + H2O. Functionally, involved in unsaturated fatty acids biosynthesis. Catalyzes the dehydration of short chain beta-hydroxyacyl-ACPs and long chain saturated and unsaturated beta-hydroxyacyl-ACPs. The sequence is that of 3-hydroxyacyl-[acyl-carrier-protein] dehydratase FabZ from Wolbachia sp. subsp. Drosophila simulans (strain wRi).